We begin with the raw amino-acid sequence, 488 residues long: Palmitoyltransferase ZDHHC14 (488 aa).

Residues 1–60 lie on the Cytoplasmic side of the membrane; the sequence is MPPGGGGPMKDCEYSQISTHSSSPMESPHKKKKIAARRKWEVFPGRNKFFCNGRIMMARQ. Residues 61-81 form a helical membrane-spanning segment; the sequence is TGVFYLTLVLILVTSGLFFAF. Residues 82–89 lie on the Lumenal side of the membrane; the sequence is DCPYLAVK. A helical membrane pass occupies residues 90-110; that stretch reads ITPAIPAVAGILFFFVMGTLL. Over 111–208 the chain is Cytoplasmic; it reads RTSFSDPGVL…GNCVGKRNYR (98 aa). The DHHC domain occupies 165–215; it reads KYCFTCKIFRPPRASHCSLCDNCVERFDHHCPWVGNCVGKRNYRFFYMFIL. Residue cysteine 195 is the S-palmitoyl cysteine intermediate of the active site. Residues 209–229 form a helical membrane-spanning segment; the sequence is FFYMFILSLSFLTVFIFAFVI. Residues 230 to 255 are Lumenal-facing; that stretch reads THVILRSQQTGFLNALKDSPASVLEA. Residues 256 to 276 form a helical membrane-spanning segment; that stretch reads VVCFFSVWSIVGLSGFHTYLI. Over 277-488 the chain is Cytoplasmic; that stretch reads SSNQTTNEDI…VRGLVKLSSV (212 aa). Serine 455 is subject to Phosphoserine.

This sequence belongs to the DHHC palmitoyltransferase family. ERF2/ZDHHC9 subfamily. Widely expressed.

The protein resides in the endoplasmic reticulum membrane. It is found in the golgi apparatus. It localises to the golgi stack membrane. The enzyme catalyses L-cysteinyl-[protein] + hexadecanoyl-CoA = S-hexadecanoyl-L-cysteinyl-[protein] + CoA. Its function is as follows. Palmitoyltransferase that could catalyze the addition of palmitate onto various protein substrates. May have a palmitoyltransferase activity toward the beta-2 adrenergic receptor/ADRB2 and thereby regulate G protein-coupled receptor signaling. May play a role in cell differentiation and apoptosis. The polypeptide is Palmitoyltransferase ZDHHC14 (Homo sapiens (Human)).